The chain runs to 160 residues: Cyclic pyranopterin monophosphate synthase (160 aa).

Residues 74–76 (LSH) and 112–113 (ME) each bind substrate. The active site involves Asp127.

The protein belongs to the MoaC family. As to quaternary structure, homohexamer; trimer of dimers.

It catalyses the reaction (8S)-3',8-cyclo-7,8-dihydroguanosine 5'-triphosphate = cyclic pyranopterin phosphate + diphosphate. It participates in cofactor biosynthesis; molybdopterin biosynthesis. Catalyzes the conversion of (8S)-3',8-cyclo-7,8-dihydroguanosine 5'-triphosphate to cyclic pyranopterin monophosphate (cPMP). This is Cyclic pyranopterin monophosphate synthase from Geobacter sulfurreducens (strain ATCC 51573 / DSM 12127 / PCA).